The chain runs to 403 residues: SEC14-like protein 2 (403 aa).

N6-succinyllysine occurs at positions 11 and 51. One can recognise a CRAL-TRIO domain in the interval proline 76 to aspartate 249. N6-succinyllysine is present on residues lysine 253 and lysine 257. Residues lysine 275–valine 383 enclose the GOLD domain. An N6-succinyllysine modification is found at lysine 393.

Monomer. In terms of tissue distribution, widely expressed. High expression in liver and small intestine.

It is found in the cytoplasm. It localises to the nucleus. Functionally, carrier protein. Binds to some hydrophobic molecules and promotes their transfer between the different cellular sites. Binds with high affinity to alpha-tocopherol. Also binds with a weaker affinity to other tocopherols and to tocotrienols. May have a transcriptional activatory activity via its association with alpha-tocopherol. Probably recognizes and binds some squalene structure, suggesting that it may regulate cholesterol biosynthesis by increasing the transfer of squalene to a metabolic active pool in the cell. In Rattus norvegicus (Rat), this protein is SEC14-like protein 2 (Sec14l2).